The following is a 338-amino-acid chain: MTDLKPFLAKVASREPLTRDEARAAFDILMSGQATPSQIGGFLMALRVRGESVDEIVGAVTTMRSKMLTVEAPADAIDIVGTGGDASGTYNISTLAALIVAGAGVPVAKHGNRALSSKSGAADNLSALGVNIDVGPEIISRCIAEASVGFMFAQLHHSAMRHVGPSRVELGTRTIFNLLGPLSNPAGVRRQLLGVFSPQWLVPLAEVMRDLGSECVWVVHGDGLDEITTTGITKVAALEDGKIRSFELSPADFGVSPCVLADIKGGDGVANAAALREVLGGAKNAYRDVSLANAAASLVISGKVETIRDGMKLAAHSLDSGATALALDKLIAVSNDID.

Residues G81, 84–85 (GD), T89, 91–94 (NIST), 109–117 (KHGNRALSS), and A121 each bind 5-phospho-alpha-D-ribose 1-diphosphate. Residue G81 participates in anthranilate binding. Position 93 (S93) interacts with Mg(2+). An anthranilate-binding site is contributed by N112. R167 provides a ligand contact to anthranilate. Mg(2+) is bound by residues D225 and E226.

The protein belongs to the anthranilate phosphoribosyltransferase family. Homodimer. Mg(2+) serves as cofactor.

It carries out the reaction N-(5-phospho-beta-D-ribosyl)anthranilate + diphosphate = 5-phospho-alpha-D-ribose 1-diphosphate + anthranilate. It functions in the pathway amino-acid biosynthesis; L-tryptophan biosynthesis; L-tryptophan from chorismate: step 2/5. In terms of biological role, catalyzes the transfer of the phosphoribosyl group of 5-phosphorylribose-1-pyrophosphate (PRPP) to anthranilate to yield N-(5'-phosphoribosyl)-anthranilate (PRA). This chain is Anthranilate phosphoribosyltransferase, found in Rhizobium etli (strain ATCC 51251 / DSM 11541 / JCM 21823 / NBRC 15573 / CFN 42).